Reading from the N-terminus, the 596-residue chain is Protein NRT1/ PTR FAMILY 3.1 (596 aa).

A compositionally biased stretch (basic and acidic residues) spans 1–16 (MEEQSKNKISEEEKQL). The interval 1–23 (MEEQSKNKISEEEKQLHGRPNRP) is disordered. 12 helical membrane passes run 27–47 (LITM…VVGF), 73–93 (FAGT…SFAG), 98–118 (ITFA…SAII), 137–157 (TAQL…SGGI), 185–205 (NWYY…LVWI), 213–233 (LGLG…VGGF), 334–354 (MGPI…QGTF), 372–392 (IPAG…IIFY), 416–436 (MGIG…VEVK), 453–473 (IVPI…VAEA), 497–517 (ALFW…VTLV), and 542–562 (YFYW…LWCA).

This sequence belongs to the major facilitator superfamily. Proton-dependent oligopeptide transporter (POT/PTR) (TC 2.A.17) family. Expressed in shoots, stems, leaves, flowers and siliques.

Its subcellular location is the membrane. In terms of biological role, may act as an efflux-type nitrite transporter. Not regulated by the PII protein involved in the regulation of nitrite uptake into higher plant chloroplasts. This Arabidopsis thaliana (Mouse-ear cress) protein is Protein NRT1/ PTR FAMILY 3.1 (NPF3.1).